The primary structure comprises 256 residues: Hydroxyacylglutathione hydrolase (256 aa).

Zn(2+)-binding residues include H58, H60, D62, H63, H116, D135, and H173.

This sequence belongs to the metallo-beta-lactamase superfamily. Glyoxalase II family. As to quaternary structure, monomer. Requires Zn(2+) as cofactor.

The catalysed reaction is an S-(2-hydroxyacyl)glutathione + H2O = a 2-hydroxy carboxylate + glutathione + H(+). The protein operates within secondary metabolite metabolism; methylglyoxal degradation; (R)-lactate from methylglyoxal: step 2/2. Its function is as follows. Thiolesterase that catalyzes the hydrolysis of S-D-lactoyl-glutathione to form glutathione and D-lactic acid. This Hyphomonas neptunium (strain ATCC 15444) protein is Hydroxyacylglutathione hydrolase.